A 294-amino-acid polypeptide reads, in one-letter code: Store-operated calcium entry regulator STIMATE (294 aa).

A disordered region spans residues 1 to 22 (MQGPAGNASRGLPGGPPSTVAS). The Cytoplasmic portion of the chain corresponds to 1 to 28 (MQGPAGNASRGLPGGPPSTVASGAGRCE). 3 helical membrane-spanning segments follow: residues 29–49 (SGAL…VVAF), 69–89 (IWFL…FANV), and 102–122 (LYLI…YVGV). Positions 149 to 153 (GAWVG) match the GXXXG motif motif. 2 helical membrane passes run 156-176 (ALYI…LLIL) and 194-214 (LAIV…WVVD). Over 215–294 (NFLMRKGKTK…KKKHRFGLPV (80 aa)) the chain is Cytoplasmic. A disordered region spans residues 227–268 (LEERGANQDSRNGSKVRYRRAASHEESESEILISADDEMEES). The interval 241 to 246 (KVRYRR) is required for localization in the endoplasmic reticulum.

This sequence belongs to the STIMATE family. As to quaternary structure, homooligomer. Interacts with STIM1. As to expression, widely expressed.

The protein resides in the endoplasmic reticulum membrane. In terms of biological role, acts as a regulator of store-operated Ca(2+) entry (SOCE) at junctional sites that connect the endoplasmic reticulum (ER) and plasma membrane (PM), called ER-plasma membrane (ER-PM) junction or cortical ER. SOCE is a Ca(2+) influx following depletion of intracellular Ca(2+) stores. Acts by interacting with STIM1, promoting STIM1 conformational switch. Involved in STIM1 relocalization to ER-PM junctions. Contributes to the maintenance and reorganization of store-dependent ER-PM junctions. In Homo sapiens (Human), this protein is Store-operated calcium entry regulator STIMATE.